Reading from the N-terminus, the 83-residue chain is Alpha-neurotoxin NTX-4 (83 aa).

Residues Met1–Thr21 form the signal peptide. Cystine bridges form between Cys24–Cys45, Cys38–Cys62, Cys64–Cys75, and Cys76–Cys81.

Belongs to the three-finger toxin family. Short-chain subfamily. Type I alpha-neurotoxin sub-subfamily. Expressed by the venom gland.

It localises to the secreted. Its function is as follows. Binds to muscle nicotinic acetylcholine receptor (nAChR) and inhibit acetylcholine from binding to the receptor, thereby impairing neuromuscular transmission. In Naja sputatrix (Malayan spitting cobra), this protein is Alpha-neurotoxin NTX-4.